The sequence spans 559 residues: 2,3-bisphosphoglycerate-independent phosphoglycerate mutase (559 aa).

2 residues coordinate Mn(2+): Asp-28 and Ser-81. Ser-81 acts as the Phosphoserine intermediate in catalysis. Substrate contacts are provided by residues His-140, 170–171, Arg-206, Arg-213, 286–289, and Lys-361; these read RD and RADR. Residues Asp-430, His-434, Asp-471, His-472, and His-501 each contribute to the Mn(2+) site.

It belongs to the BPG-independent phosphoglycerate mutase family. As to quaternary structure, monomer. It depends on Mn(2+) as a cofactor. Post-translationally, the N-terminus is blocked. In terms of tissue distribution, found ubiquitously in germinating seed.

It is found in the cytoplasm. It catalyses the reaction (2R)-2-phosphoglycerate = (2R)-3-phosphoglycerate. The protein operates within carbohydrate degradation; glycolysis; pyruvate from D-glyceraldehyde 3-phosphate: step 3/5. Functionally, catalyzes the interconversion of 2-phosphoglycerate and 3-phosphoglycerate. This is 2,3-bisphosphoglycerate-independent phosphoglycerate mutase from Zea mays (Maize).